The primary structure comprises 338 residues: Lipoate-protein ligase A (338 aa).

In terms of domain architecture, BPL/LPL catalytic spans Ser29 to Val216. ATP is bound by residues Arg71, Gly76–Phe79, and Lys134. Lys134 provides a ligand contact to (R)-lipoate.

The protein belongs to the LplA family. As to quaternary structure, monomer.

Its subcellular location is the cytoplasm. The enzyme catalyses L-lysyl-[lipoyl-carrier protein] + (R)-lipoate + ATP = N(6)-[(R)-lipoyl]-L-lysyl-[lipoyl-carrier protein] + AMP + diphosphate + H(+). The protein operates within protein modification; protein lipoylation via exogenous pathway; protein N(6)-(lipoyl)lysine from lipoate: step 1/2. It functions in the pathway protein modification; protein lipoylation via exogenous pathway; protein N(6)-(lipoyl)lysine from lipoate: step 2/2. Catalyzes both the ATP-dependent activation of exogenously supplied lipoate to lipoyl-AMP and the transfer of the activated lipoyl onto the lipoyl domains of lipoate-dependent enzymes. The polypeptide is Lipoate-protein ligase A (Yersinia pseudotuberculosis serotype IB (strain PB1/+)).